The following is a 199-amino-acid chain: MNILLLLMLLTSIILLVILIFLAYNEIMEKPTSSCITPAPESQSISPDQTTQLQTTTPVTSTPSNPTPTTIIPNLPPTLNPLSEIVSNGDNVLQQQQSLINGDFAASIQLDGNLCISNTKNQSVLWCSNSAELGQAPYFLLLRSDGNMCIQDSHNNPTWCSGVIGGQSPWKATLQSDGDLCINDYLGQELWCATRKLPN.

Positions M1 to N25 are cleaved as a signal peptide. Polar residues predominate over residues C35–D48. The interval C35 to N74 is disordered. The segment covering Q49–P73 has biased composition (low complexity). The Bulb-type lectin domain occupies E84–R195. N121 is a glycosylation site (N-linked (GlcNAc...) asparagine; by host).

Its subcellular location is the secreted. In Acanthamoeba polyphaga (Amoeba), this protein is Putative lectin L633.